A 302-amino-acid polypeptide reads, in one-letter code: Protein FdhE homolog (302 aa).

This sequence belongs to the FdhE family.

The protein localises to the cytoplasm. Its function is as follows. Necessary for formate dehydrogenase activity. The sequence is that of Protein FdhE homolog from Haemophilus influenzae (strain PittEE).